Reading from the N-terminus, the 354-residue chain is Probable disease resistance protein At5g45490 (354 aa).

Positions 33-53 (AKGNLEKKRDDNEEEERLKTE) form a coiled coil. In terms of domain architecture, NB-ARC spans 45–122 (EEEERLKTES…VYAPRVWVSM (78 aa)). 91–98 (GEYGVGKT) lines the ATP pocket. The segment at 328 to 354 (DDEVGPVGSTHGQTDSSNRQPANQASS) is disordered. Positions 337-354 (THGQTDSSNRQPANQASS) are enriched in polar residues.

Its function is as follows. Possible disease resistance protein. This chain is Probable disease resistance protein At5g45490, found in Arabidopsis thaliana (Mouse-ear cress).